The primary structure comprises 953 residues: TPR repeat-containing protein ZIP4 (953 aa).

The TPR 1 repeat unit spans residues 129–162 (ASFFHRSGLAWLDLGRVDLASACFEKATPLVSAA). A disordered region spans residues 248-269 (AASPSSSSPRTPPYGGATPKTP). 2 TPR repeats span residues 432 to 465 (HALL…VSRD) and 473 to 506 (ADCF…EPNI). The disordered stretch occupies residues 925–953 (VSGDEPDECSQEEAPKASISGSMSQPVLV). Polar residues predominate over residues 943 to 953 (ISGSMSQPVLV).

As to quaternary structure, interacts with HEI10 and SHOC1.

It is found in the nucleus. Its subcellular location is the chromosome. In terms of biological role, required for crossover formation, complete synapsis of homologous chromosomes and bivalent formation during meiosis. Is specific to recombination events resulting in interference-sensitive crossovers (class I meiotic crossover) and works cooperatively with MER3 to promote crossovers. This is TPR repeat-containing protein ZIP4 from Oryza sativa subsp. japonica (Rice).